The following is a 616-amino-acid chain: Methionine--tRNA ligase, chloroplastic/mitochondrial (616 aa).

The 'HIGH' region signature appears at 78–88 (YYVNAPPHMGS). Positions 366–370 (KMGKS) match the 'KMSKS' region motif. K369 contributes to the ATP binding site. A compositionally biased stretch (basic and acidic residues) spans 582 to 593 (LNPEKEEDEKKP). The tract at residues 582–602 (LNPEKEEDEKKPKVGKKTGKA) is disordered.

Belongs to the class-I aminoacyl-tRNA synthetase family.

It is found in the plastid. Its subcellular location is the chloroplast. The protein localises to the mitochondrion. The catalysed reaction is tRNA(Met) + L-methionine + ATP = L-methionyl-tRNA(Met) + AMP + diphosphate. The sequence is that of Methionine--tRNA ligase, chloroplastic/mitochondrial from Arabidopsis thaliana (Mouse-ear cress).